A 347-amino-acid chain; its full sequence is Ribosomal RNA large subunit methyltransferase M (347 aa).

Residues S184, 217-220, D236, D256, and D272 contribute to the S-adenosyl-L-methionine site; that span reads APGG. The active-site Proton acceptor is the K301.

It belongs to the class I-like SAM-binding methyltransferase superfamily. RNA methyltransferase RlmE family. RlmM subfamily. As to quaternary structure, monomer.

The protein resides in the cytoplasm. The catalysed reaction is cytidine(2498) in 23S rRNA + S-adenosyl-L-methionine = 2'-O-methylcytidine(2498) in 23S rRNA + S-adenosyl-L-homocysteine + H(+). Catalyzes the 2'-O-methylation at nucleotide C2498 in 23S rRNA. The protein is Ribosomal RNA large subunit methyltransferase M of Xanthomonas axonopodis pv. citri (strain 306).